The following is a 224-amino-acid chain: MSKKTKVSMAVIRRLPRYHRYLEELLKNDVKRISSRELSEKMGVTASQIRQDLNNFGGFGQQGYGYNVEELYNNLTKILGLDKTYNTIIIGAGNLGQAIANYTSFEKSGFNLKGIFDINPRLFGLKIRDVEVMDIETVEDFIARNKIDIGILCIPKDNAQYTADRLVRAGIKAIWNFSPIDLKVPDDVILENVHLSDSLFTVSYRLNEEELFKKLKGETAKIDG.

The segment at residues 17–56 is a DNA-binding region (H-T-H motif); that stretch reads RYHRYLEELLKNDVKRISSRELSEKMGVTASQIRQDLNNF. An NAD(+)-binding site is contributed by 91-96; it reads GAGNLG.

This sequence belongs to the transcriptional regulatory Rex family. In terms of assembly, homodimer.

The protein resides in the cytoplasm. Modulates transcription in response to changes in cellular NADH/NAD(+) redox state. In Thermoanaerobacter pseudethanolicus (strain ATCC 33223 / 39E) (Clostridium thermohydrosulfuricum), this protein is Redox-sensing transcriptional repressor Rex.